A 352-amino-acid chain; its full sequence is Heat-inducible transcription repressor HrcA (352 aa).

It belongs to the HrcA family.

Functionally, negative regulator of class I heat shock genes (grpE-dnaK-dnaJ and groELS operons). Prevents heat-shock induction of these operons. This is Heat-inducible transcription repressor HrcA from Thermosynechococcus vestitus (strain NIES-2133 / IAM M-273 / BP-1).